The primary structure comprises 263 residues: Endonuclease 8 (263 aa).

Residue Pro2 is the Schiff-base intermediate with DNA of the active site. Glu3 functions as the Proton donor in the catalytic mechanism. Lys53 acts as the Proton donor; for beta-elimination activity in catalysis. Residues Gln70, Arg125, and Asn169 each contribute to the DNA site. An FPG-type zinc finger spans residues 229–263 (KVFHRDGELCERCGGIIEKTTLSSRPFYWCPGCQH). Arg253 acts as the Proton donor; for delta-elimination activity in catalysis.

Belongs to the FPG family. Zn(2+) is required as a cofactor.

The catalysed reaction is 2'-deoxyribonucleotide-(2'-deoxyribose 5'-phosphate)-2'-deoxyribonucleotide-DNA = a 3'-end 2'-deoxyribonucleotide-(2,3-dehydro-2,3-deoxyribose 5'-phosphate)-DNA + a 5'-end 5'-phospho-2'-deoxyribonucleoside-DNA + H(+). In terms of biological role, involved in base excision repair of DNA damaged by oxidation or by mutagenic agents. Acts as a DNA glycosylase that recognizes and removes damaged bases. Has a preference for oxidized pyrimidines, such as thymine glycol, 5,6-dihydrouracil and 5,6-dihydrothymine. Has AP (apurinic/apyrimidinic) lyase activity and introduces nicks in the DNA strand. Cleaves the DNA backbone by beta-delta elimination to generate a single-strand break at the site of the removed base with both 3'- and 5'-phosphates. This chain is Endonuclease 8, found in Escherichia coli (strain 55989 / EAEC).